The primary structure comprises 1166 residues: MSQKVTPFMQSLKSLPADYRFDGSPVSDRLENSSGASVRLTNSNVPRKGGLRNGVSRTDTAAGDSEDSPYSGHGVFVEEQSLTDDVDSGAATMPLPQSDERRWSDTSAYARKKILQSWIQLPNGNWELGKILSTSGEESVISLPEGKVIKVISETLVPANPDILDGVDDLMQLSYLNEPSVLYNLNYRYNQDMIYTKAGPVLVAVNPFKEVPLYGNRYIEAYRKKSNESPHVYAIADTAIREMIRDEVNQSIIISGESGAGKTETAKIAMQYLAALGGGSGIEYEILKTNPILEAFGNAKTLRNDNSSRFGKLIEIHFSESGKISGAQIQTFLLEKSRVVQCAEGERSYHIFYQLCAGASPALREKLNLTSAHEYKYLGQSNCYSINGVDDAERFHTVKEALDIVHVSKEDQESVFAMLAAVLWLGNVSFTVIDNENHVEPVADESLSTVAKLIGCNINELTLTLSKRNMRVRNDTIVQKLTLPQAIDARDALAKSIYSCLFDWLVEQINKSLAVGKRRTGRSISILDIYGFESFDKNSFEQFCINYANERLQQHFNRHLFKLEQEEYIQDGIDWTRVDFEDNQNCLSLFEKKPLGLLSLLDEESTFPNGTDLTLANKLKQHLQSNSCFRGDKGKLFTVVHYAGEVTYETTGFLEKNRDLLHSDSIQLLSSCSCLLPQAFASSMLIQSEKPVVGPLYKAGGADSQRLSVATKFKSQLFQLMQRLGNTTPHFIRCIKPNNIQSPGVYEQGLVLQQLRCCGVLEVVRISRSGFPTRMSHQKFSRRYGFLLVENIADRDPLSVSVAILHQFNILPEMYQVGYTKLFFRTGQIGVLEDTRNRTLHGILRVQSSFRGYQARCLLKELKRGISILQSFVRGEKIRKEFAELRRRHKAAATIQSQVKSKIARIQYKGIADASVVIQSAIRGWLVRRCSGDIGWLKSGGAKTNELGEVLVKASVLSELQRRVLKAEAALREKEEENDILQQRLQQYENRWSEYETKMKSMEEIWQKQMRSLQSSLSIAKKSLAVEDSARNSDASVNASDATDWDSSSNQFRSQTSNGVGSRLQPMSAGLSVIGRLAEEFEQRAQVFGDDAKFLVEVKSGQVEANLDPDRELRRLKQMFETWKKDYGGRLRETKLILSKLGSEESSGSMEKVKRKWWGRRNSTRY.

Over residues 1–13 (MSQKVTPFMQSLK) the composition is skewed to polar residues. Positions 1-71 (MSQKVTPFMQ…AGDSEDSPYS (71 aa)) are disordered. A Phosphoserine modification is found at Ser14. The span at 32–45 (NSSGASVRLTNSNV) shows a compositional bias: polar residues. The region spanning 112–161 (KKILQSWIQLPNGNWELGKILSTSGEESVISLPEGKVIKVISETLVPANP) is the Myosin N-terminal SH3-like domain. A Myosin motor domain is found at 165–837 (DGVDDLMQLS…QIGVLEDTRN (673 aa)). ATP is bound by residues 256–263 (GESGAGKT) and 304–312 (NDNSSRFGK). Actin-binding stretches follow at residues 589-623 (LFEK…KQHL) and 717-739 (LFQL…KPNN). 4 consecutive IQ domains span residues 839-868 (TLHG…GISI), 862-891 (LKRG…RHKA), 888-917 (RHKA…ASVV), and 911-940 (IADA…LKSG). Residues 955–1005 (SVLSELQRRVLKAEAALREKEEENDILQQRLQQYENRWSEYETKMKSMEEI) adopt a coiled-coil conformation. The segment at 1030–1065 (ARNSDASVNASDATDWDSSSNQFRSQTSNGVGSRLQ) is disordered. Polar residues predominate over residues 1032 to 1060 (NSDASVNASDATDWDSSSNQFRSQTSNGV).

This sequence belongs to the TRAFAC class myosin-kinesin ATPase superfamily. Myosin family. Plant myosin class VIII subfamily. As to quaternary structure, homodimer.

The protein localises to the cell junction. It localises to the plasmodesma. Its subcellular location is the cytoplasm. It is found in the cytoskeleton. The protein resides in the phragmoplast. The protein localises to the endosome. It localises to the endoplasmic reticulum. Functionally, myosin heavy chain that is required for the cell cycle-regulated transport of various organelles and proteins for their segregation. Functions by binding with its tail domain to receptor proteins on organelles and exerting force with its N-terminal motor domain against actin filaments, thereby transporting its cargo along polarized actin cables. Involved in endocytosis via its action in endosomal trafficking. In Arabidopsis thaliana (Mouse-ear cress), this protein is Myosin-1 (VIII-1).